The sequence spans 228 residues: Putative N-acetylmannosamine-6-phosphate 2-epimerase (228 aa).

This sequence belongs to the NanE family.

The enzyme catalyses an N-acyl-D-glucosamine 6-phosphate = an N-acyl-D-mannosamine 6-phosphate. The protein operates within amino-sugar metabolism; N-acetylneuraminate degradation; D-fructose 6-phosphate from N-acetylneuraminate: step 3/5. Converts N-acetylmannosamine-6-phosphate (ManNAc-6-P) to N-acetylglucosamine-6-phosphate (GlcNAc-6-P). The chain is Putative N-acetylmannosamine-6-phosphate 2-epimerase from Lactiplantibacillus plantarum (strain ATCC BAA-793 / NCIMB 8826 / WCFS1) (Lactobacillus plantarum).